Reading from the N-terminus, the 181-residue chain is ATP synthase subunit delta (181 aa).

It belongs to the ATPase delta chain family. As to quaternary structure, F-type ATPases have 2 components, F(1) - the catalytic core - and F(0) - the membrane proton channel. F(1) has five subunits: alpha(3), beta(3), gamma(1), delta(1), epsilon(1). F(0) has three main subunits: a(1), b(2) and c(10-14). The alpha and beta chains form an alternating ring which encloses part of the gamma chain. F(1) is attached to F(0) by a central stalk formed by the gamma and epsilon chains, while a peripheral stalk is formed by the delta and b chains.

The protein resides in the cell membrane. F(1)F(0) ATP synthase produces ATP from ADP in the presence of a proton or sodium gradient. F-type ATPases consist of two structural domains, F(1) containing the extramembraneous catalytic core and F(0) containing the membrane proton channel, linked together by a central stalk and a peripheral stalk. During catalysis, ATP synthesis in the catalytic domain of F(1) is coupled via a rotary mechanism of the central stalk subunits to proton translocation. Its function is as follows. This protein is part of the stalk that links CF(0) to CF(1). It either transmits conformational changes from CF(0) to CF(1) or is implicated in proton conduction. This Clostridium kluyveri (strain NBRC 12016) protein is ATP synthase subunit delta.